The following is a 1263-amino-acid chain: DNA-directed RNA polymerase subunit beta (1263 aa).

This sequence belongs to the RNA polymerase beta chain family. The RNAP catalytic core consists of 2 alpha, 1 beta, 1 beta' and 1 omega subunit. When a sigma factor is associated with the core the holoenzyme is formed, which can initiate transcription.

The enzyme catalyses RNA(n) + a ribonucleoside 5'-triphosphate = RNA(n+1) + diphosphate. In terms of biological role, DNA-dependent RNA polymerase catalyzes the transcription of DNA into RNA using the four ribonucleoside triphosphates as substrates. This Thermotoga maritima (strain ATCC 43589 / DSM 3109 / JCM 10099 / NBRC 100826 / MSB8) protein is DNA-directed RNA polymerase subunit beta.